A 90-amino-acid chain; its full sequence is Small ribosomal subunit protein bS16 (90 aa).

Belongs to the bacterial ribosomal protein bS16 family.

The protein is Small ribosomal subunit protein bS16 of Fervidobacterium nodosum (strain ATCC 35602 / DSM 5306 / Rt17-B1).